Consider the following 90-residue polypeptide: DNA-binding protein HU-alpha (90 aa).

It belongs to the bacterial histone-like protein family. Heterodimer of an alpha and a beta chain.

Functionally, histone-like DNA-binding protein which is capable of wrapping DNA to stabilize it, and thus to prevent its denaturation under extreme environmental conditions. This Aeromonas hydrophila protein is DNA-binding protein HU-alpha (hupA).